Consider the following 114-residue polypeptide: Amphinase-3 (114 aa).

Histidine 15 (proton acceptor) is an active-site residue. The N-linked (GlcNAc...) asparagine glycan is linked to asparagine 25. Intrachain disulfides connect cysteine 26/cysteine 79, cysteine 41/cysteine 85, cysteine 59/cysteine 100, and cysteine 97/cysteine 114. Residue 42 to 46 (KPINT) participates in substrate binding. Residues asparagine 67 and asparagine 91 are each glycosylated (N-linked (GlcNAc...) asparagine). The active-site Proton donor is the histidine 107.

This sequence belongs to the pancreatic ribonuclease family. In terms of assembly, monomer. There are at least five different forms arising from glycan heterogeneity.

Its subcellular location is the secreted. Its function is as follows. Endonuclease, hydrolyzes highly polymerized RNA, poly(U) and poly(C), and the dinucleotides CpA and UpA. More active towards rCA than rUA or rUG. Has cytotoxic activity against cultured human submaxillary gland carcinoma cells. The polypeptide is Amphinase-3 (Lithobates pipiens (Northern leopard frog)).